A 185-amino-acid chain; its full sequence is Iodate reductase subunit IdrB (185 aa).

The segment at residues 1–46 is a signal peptide (tat-type signal); that stretch reads MTTHPIHLHHDDPAHGGERACMSRRSFLLAGGAMVTLASLPGTAVA. A Rieske domain is found at 69-168; that stretch reads GEPLEFAYPY…LEVRGDDIYA (100 aa). [2Fe-2S] cluster is bound by residues Cys109, His111, Cys130, and His133.

The protein belongs to the AOX family. The iodate reductase (Idr) complex is composed of a molybdopterin-dependent iodate reductase (IdrA and IdrB subunits) and two associated peroxidases (IdrP1 and IdrP2). [2Fe-2S] cluster is required as a cofactor. Predicted to be exported by the Tat system. The position of the signal peptide cleavage has not been experimentally proven.

The protein resides in the periplasm. Its function is as follows. Involved in iodate respiration. May accept electrons from cytochrome c551, and catalyze the reduction of iodate (IO(3)(-)) to produce the chemically unstable intermediate hypoiodous acid (HIO). This intermediate then undergoes abiotic disproportionation to yield two molecules of iodide (I(-)) and one molecule of iodate. The resultant iodate subsequently cycles back into the reductive pathway. The initial reduction of iodate may inadvertently produce low levels of incidental toxic H(2)O(2), which is detoxified by IdrP1 and IdrP2. This chain is Iodate reductase subunit IdrB, found in Denitromonas iodatirespirans.